Here is a 203-residue protein sequence, read N- to C-terminus: GTP cyclohydrolase 1 (203 aa).

Zn(2+) is bound by residues Cys-87, His-90, and Cys-158.

It belongs to the GTP cyclohydrolase I family. As to quaternary structure, toroid-shaped homodecamer, composed of two pentamers of five dimers.

The catalysed reaction is GTP + H2O = 7,8-dihydroneopterin 3'-triphosphate + formate + H(+). It functions in the pathway cofactor biosynthesis; 7,8-dihydroneopterin triphosphate biosynthesis; 7,8-dihydroneopterin triphosphate from GTP: step 1/1. This is GTP cyclohydrolase 1 from Xylella fastidiosa (strain 9a5c).